The sequence spans 79 residues: Serine protease inhibitor Kazal-type 1-like (79 aa).

Residues 1-23 (MKVAIIFLLSALALLNLAGNTTA) form the signal peptide. The region spanning 26–79 (IGKKANCPNTLVGCPRDYDPVCGTDGKTYANECILCFENRKFGTSIRIQRRGLC) is the Kazal-like domain. 3 disulfide bridges follow: cysteine 32–cysteine 61, cysteine 39–cysteine 58, and cysteine 47–cysteine 79.

In terms of tissue distribution, seminal vesicle.

Its subcellular location is the secreted. Its function is as follows. Serine protease inhibitor which exhibits anti-trypsin activity. In the pancreas, protects against trypsin-catalyzed premature activation of zymogens. Functionally, in the male reproductive tract, binds to sperm heads where it modulates sperm capacitance by inhibiting calcium uptake and nitrogen oxide (NO) production. The chain is Serine protease inhibitor Kazal-type 1-like from Rattus norvegicus (Rat).